The chain runs to 157 residues: uncharacterized protein (157 aa).

The region spanning 9–154 is the N-acetyltransferase domain; sequence LLINYKTLDE…ETNLNAVTNE (146 aa).

This is an uncharacterized protein from Bacillus cereus (strain ATCC 14579 / DSM 31 / CCUG 7414 / JCM 2152 / NBRC 15305 / NCIMB 9373 / NCTC 2599 / NRRL B-3711).